Here is a 526-residue protein sequence, read N- to C-terminus: Probable di/tripeptide-binding protein 5 (526 aa).

A signal peptide spans 1-21; that stretch reads MRLAAFSLFLAPLLLAQPAAA.

It belongs to the bacterial solute-binding protein 5 family. In terms of assembly, the complex is composed of two ATP-binding proteins (DppD and DppF), two transmembrane proteins (DppB and DppC) and a solute-binding protein (DppA5). Five orthologous SBPs (DppA1-A5) are present in P.aeruginosa, which increases the substrate specificity of the DppBCDF transporter.

Functionally, part of the ABC transporter DppABCDF involved in the uptake of various di/tripeptides. This is Probable di/tripeptide-binding protein 5 from Pseudomonas aeruginosa (strain UCBPP-PA14).